Reading from the N-terminus, the 91-residue chain is Large ribosomal subunit protein bL27 (91 aa).

It belongs to the bacterial ribosomal protein bL27 family.

The sequence is that of Large ribosomal subunit protein bL27 from Pseudomonas savastanoi pv. phaseolicola (strain 1448A / Race 6) (Pseudomonas syringae pv. phaseolicola (strain 1448A / Race 6)).